A 433-amino-acid chain; its full sequence is Glutamate-rich protein 2 (433 aa).

Disordered stretches follow at residues 56–86, 113–161, 189–273, 308–344, and 394–433; these read VPAA…LAPP, DSAS…KHPQ, SRQN…SIET, CLED…TRAP, and EKAQ…EDGS. Residues 63 to 85 show a composition bias toward pro residues; the sequence is PAPPPPRALRPAPGPPRSAPLAP. The segment covering 114–127 has biased composition (polar residues); sequence SASQARGSEPSSSA. 2 stretches are compositionally biased toward basic and acidic residues: residues 199–214 and 244–258; these read DPKE…EKPQ and ARKE…DKVS. Over residues 259-273 the composition is skewed to polar residues; that stretch reads LKSSENRPSSRSIET. Acidic residues-rich tracts occupy residues 308-334 and 397-433; these read CLED…EDDE and QEEE…EDGS.

This chain is Glutamate-rich protein 2 (Erich2), found in Rattus norvegicus (Rat).